A 201-amino-acid chain; its full sequence is Dephospho-CoA kinase (201 aa).

Residues 3 to 201 (VIGLTGGIAS…WKERIEKNPR (199 aa)) enclose the DPCK domain. ATP is bound at residue 11 to 16 (ASGKST).

This sequence belongs to the CoaE family.

The protein localises to the cytoplasm. It catalyses the reaction 3'-dephospho-CoA + ATP = ADP + CoA + H(+). It functions in the pathway cofactor biosynthesis; coenzyme A biosynthesis; CoA from (R)-pantothenate: step 5/5. In terms of biological role, catalyzes the phosphorylation of the 3'-hydroxyl group of dephosphocoenzyme A to form coenzyme A. The polypeptide is Dephospho-CoA kinase (Geobacter metallireducens (strain ATCC 53774 / DSM 7210 / GS-15)).